The primary structure comprises 615 residues: UvrABC system protein C (615 aa).

Residues 14-91 enclose the GIY-YIG domain; sequence TSPGCYIHKD…IKENKPKYNI (78 aa). Residues 196–231 enclose the UVR domain; that stretch reads NKIIDELKGKMAAAAQTMEFERAAEYRDLIQAIGTL.

The protein belongs to the UvrC family. As to quaternary structure, interacts with UvrB in an incision complex.

The protein localises to the cytoplasm. Its function is as follows. The UvrABC repair system catalyzes the recognition and processing of DNA lesions. UvrC both incises the 5' and 3' sides of the lesion. The N-terminal half is responsible for the 3' incision and the C-terminal half is responsible for the 5' incision. In Streptococcus pneumoniae (strain JJA), this protein is UvrABC system protein C.